Consider the following 68-residue polypeptide: Large ribosomal subunit protein bL28 (68 aa).

A disordered region spans residues 1 to 30 (MAKICDHCGKKPQSGNNVSHANNKSKRRFE). Positions 13-22 (QSGNNVSHAN) are enriched in polar residues.

It belongs to the bacterial ribosomal protein bL28 family.

The chain is Large ribosomal subunit protein bL28 from Solidesulfovibrio magneticus (strain ATCC 700980 / DSM 13731 / RS-1) (Desulfovibrio magneticus).